Consider the following 232-residue polypeptide: Translation initiation factor IF-3 (232 aa).

Disordered stretches follow at residues 1–21 (MAIQHRDPRGGGGSRDARTNR) and 184–232 (LQSQ…AAQR). A compositionally biased stretch (low complexity) spans 193 to 208 (AAAAAAPAAAPAAGAP). Positions 209–222 (APTPAPAPAAPAPA) are enriched in pro residues. A compositionally biased stretch (low complexity) spans 223-232 (PAAADPAAQR).

The protein belongs to the IF-3 family. As to quaternary structure, monomer.

It is found in the cytoplasm. IF-3 binds to the 30S ribosomal subunit and shifts the equilibrium between 70S ribosomes and their 50S and 30S subunits in favor of the free subunits, thus enhancing the availability of 30S subunits on which protein synthesis initiation begins. The sequence is that of Translation initiation factor IF-3 from Anaeromyxobacter sp. (strain K).